We begin with the raw amino-acid sequence, 60 residues long: U20-myrmicitoxin-Mri1a (60 aa).

An N-terminal signal peptide occupies residues 1–24 (MKSVILLFAVIAIIVAVIIPAING). Residues 25 to 34 (ESSSNPSANA) constitute a propeptide that is removed on maturation.

It belongs to the formicidae venom precursor-01 superfamily. As to expression, expressed by the venom gland.

It localises to the secreted. Induces paralysis 5 minutes after injection into blowflies (L.caesar), and then death within 24 hours. May have antimicrobial properties, like most ant linear peptides. This Manica rubida (European giant red ant) protein is U20-myrmicitoxin-Mri1a.